Here is a 906-residue protein sequence, read N- to C-terminus: Protein translocase subunit SecA (906 aa).

Residues glutamine 86, 104 to 108 (GEGKT), and aspartate 499 each bind ATP. Positions 865–885 (VSRIDPKDRNPEDPTSWGRVS) are disordered. Residues cysteine 890, cysteine 892, cysteine 901, and histidine 902 each coordinate Zn(2+).

This sequence belongs to the SecA family. In terms of assembly, monomer and homodimer. Part of the essential Sec protein translocation apparatus which comprises SecA, SecYEG and auxiliary proteins SecDF-YajC and YidC. Zn(2+) is required as a cofactor.

The protein resides in the cell inner membrane. It localises to the cytoplasm. The enzyme catalyses ATP + H2O + cellular proteinSide 1 = ADP + phosphate + cellular proteinSide 2.. In terms of biological role, part of the Sec protein translocase complex. Interacts with the SecYEG preprotein conducting channel. Has a central role in coupling the hydrolysis of ATP to the transfer of proteins into and across the cell membrane, serving both as a receptor for the preprotein-SecB complex and as an ATP-driven molecular motor driving the stepwise translocation of polypeptide chains across the membrane. The polypeptide is Protein translocase subunit SecA (Rickettsia canadensis (strain McKiel)).